A 113-amino-acid chain; its full sequence is UPF0102 protein Mfla_2283 (113 aa).

This sequence belongs to the UPF0102 family.

The chain is UPF0102 protein Mfla_2283 from Methylobacillus flagellatus (strain ATCC 51484 / DSM 6875 / VKM B-1610 / KT).